Here is a 399-residue protein sequence, read N- to C-terminus: Methylmalonic aciduria type A homolog, mitochondrial (399 aa).

A mitochondrion-targeting transit peptide spans 1–15 (MVVRSLLRVSRLTSA). GTP is bound by residues 131–139 (GSPGVGKSS), Asp274, and 310–312 (SIM).

This sequence belongs to the SIMIBI class G3E GTPase family. ArgK/MeaB subfamily.

It localises to the mitochondrion. Functionally, may have GTPase activity. May also bind and hydrolyze ATP. May function as chaperone. Likely to have a role in propionyl-CoA and adenosylcobalamin metabolism. This chain is Methylmalonic aciduria type A homolog, mitochondrial (mmaa-1), found in Caenorhabditis elegans.